Here is a 437-residue protein sequence, read N- to C-terminus: Transcription factor 12 (437 aa).

Disordered stretches follow at residues 1–68 (EFHD…QTGD), 80–123 (PDHT…YENS), and 244–335 (ASNT…ERRM). Over residues 13 to 37 (VSPTDISTSLPPMSSFHRGSTSSSP) the composition is skewed to polar residues. Thr44 is subject to Phosphothreonine. Residue Ser64 is modified to Phosphoserine. Positions 83-94 (TSSSFPSNPSTP) are enriched in low complexity. 2 stretches are compositionally biased toward polar residues: residues 95-107 (VGSP…TSQW) and 114-123 (APSSPSYENS). Basic and acidic residues-rich tracts occupy residues 273-285 (IKTE…ENLH) and 291-306 (DDMK…DIKV). Lys274 is covalently cross-linked (Glycyl lysine isopeptide (Lys-Gly) (interchain with G-Cter in SUMO2)). Ser295 carries the phosphoserine modification. Residue Lys305 forms a Glycyl lysine isopeptide (Lys-Gly) (interchain with G-Cter in SUMO2) linkage. A Phosphothreonine modification is found at Thr312. Phosphoserine occurs at positions 313 and 314. The span at 323-335 (PEQKIEREKERRM) shows a compositional bias: basic and acidic residues. The 54-residue stretch at 332 to 385 (ERRMANNARERLRVRDINEAFKELGRMCQLHLKSEKPQTKLLILHQAVAVILSL) folds into the bHLH domain. Residues Lys364 and Lys408 each participate in a glycyl lysine isopeptide (Lys-Gly) (interchain with G-Cter in SUMO2) cross-link. The class A specific domain stretch occupies residues 387–410 (QQVRERNLNPKAACLKRREEEKVS). Residues 405–437 (EEEKVSAASAEPPTTLPGTHPGLSETTNPMGHL) form a disordered region. Residues 416–427 (PPTTLPGTHPGL) are compositionally biased toward low complexity. Over residues 428 to 437 (SETTNPMGHL) the composition is skewed to polar residues.

In terms of assembly, efficient DNA binding requires dimerization with another bHLH protein. Forms homo- or heterooligomers with myogenin, E12 and ITF2 proteins. Interacts with NEUROD2. Interacts with PTF1A. Interacts with RUNX1T1. Interacts with BHLHA9.

Its subcellular location is the nucleus. In terms of biological role, transcriptional regulator. Involved in the initiation of neuronal differentiation. Activates transcription by binding to the E box (5'-CANNTG-3'). Participates in the control of inducible RP4 gene expression in salivary cells. Binds to the RIPE3 element of the insulin II promoter. May be involved in the functional network that regulates the development of the GnRH axis. The polypeptide is Transcription factor 12 (TCF12) (Mesocricetus auratus (Golden hamster)).